A 248-amino-acid chain; its full sequence is Triosephosphate isomerase (248 aa).

Asparagine 11–lysine 13 provides a ligand contact to substrate. Histidine 95 acts as the Electrophile in catalysis. Glutamate 167 (proton acceptor) is an active-site residue. Residues glycine 173, serine 212, and glycine 233 to glycine 234 each bind substrate.

The protein belongs to the triosephosphate isomerase family. In terms of assembly, homodimer.

It localises to the cytoplasm. It catalyses the reaction D-glyceraldehyde 3-phosphate = dihydroxyacetone phosphate. It participates in carbohydrate biosynthesis; gluconeogenesis. It functions in the pathway carbohydrate degradation; glycolysis; D-glyceraldehyde 3-phosphate from glycerone phosphate: step 1/1. In terms of biological role, involved in the gluconeogenesis. Catalyzes stereospecifically the conversion of dihydroxyacetone phosphate (DHAP) to D-glyceraldehyde-3-phosphate (G3P). The chain is Triosephosphate isomerase from Ralstonia nicotianae (strain ATCC BAA-1114 / GMI1000) (Ralstonia solanacearum).